The following is a 341-amino-acid chain: Endolytic peptidoglycan transglycosylase RlpA (341 aa).

A signal peptide spans 1–26 (MSKRVRSSLILPAVCGLGLAAVLLSS). Residue Cys27 is the site of N-palmitoyl cysteine attachment. Residue Cys27 is the site of S-diacylglycerol cysteine attachment. The SPOR domain occupies 260-341 (SLPADGLYLQ…LGQPTLVRPD (82 aa)).

It belongs to the RlpA family.

It localises to the cell membrane. Its function is as follows. Lytic transglycosylase with a strong preference for naked glycan strands that lack stem peptides. Required for efficient separation of daughter cells and maintenance of rod shape. This is Endolytic peptidoglycan transglycosylase RlpA from Pseudomonas aeruginosa (strain UCBPP-PA14).